A 424-amino-acid polypeptide reads, in one-letter code: Adenylosuccinate synthetase (424 aa).

GTP is bound by residues glycine 12–lysine 18 and glycine 40–threonine 42. Aspartate 13 (proton acceptor) is an active-site residue. Residues aspartate 13 and glycine 40 each contribute to the Mg(2+) site. IMP is bound by residues aspartate 13–lysine 16, asparagine 38–histidine 41, threonine 130, arginine 144, asparagine 220, threonine 235, and arginine 299. Histidine 41 (proton donor) is an active-site residue. Valine 295–arginine 301 provides a ligand contact to substrate. GTP contacts are provided by residues arginine 301, lysine 327 to aspartate 329, and glycine 412 to glycine 414.

This sequence belongs to the adenylosuccinate synthetase family. Homodimer. The cofactor is Mg(2+).

It localises to the cytoplasm. The enzyme catalyses IMP + L-aspartate + GTP = N(6)-(1,2-dicarboxyethyl)-AMP + GDP + phosphate + 2 H(+). The protein operates within purine metabolism; AMP biosynthesis via de novo pathway; AMP from IMP: step 1/2. In terms of biological role, plays an important role in the de novo pathway and in the salvage pathway of purine nucleotide biosynthesis. Catalyzes the first committed step in the biosynthesis of AMP from IMP. The sequence is that of Adenylosuccinate synthetase from Aspergillus clavatus (strain ATCC 1007 / CBS 513.65 / DSM 816 / NCTC 3887 / NRRL 1 / QM 1276 / 107).